The primary structure comprises 478 residues: Protein nucleotidyltransferase YdiU (478 aa).

ATP contacts are provided by G84, G86, R87, K107, D119, G120, R170, and R177. The active-site Proton acceptor is D246. Positions 247 and 256 each coordinate Mg(2+). Residue D256 coordinates ATP.

This sequence belongs to the SELO family. Mg(2+) serves as cofactor. Requires Mn(2+) as cofactor.

The enzyme catalyses L-seryl-[protein] + ATP = 3-O-(5'-adenylyl)-L-seryl-[protein] + diphosphate. It catalyses the reaction L-threonyl-[protein] + ATP = 3-O-(5'-adenylyl)-L-threonyl-[protein] + diphosphate. It carries out the reaction L-tyrosyl-[protein] + ATP = O-(5'-adenylyl)-L-tyrosyl-[protein] + diphosphate. The catalysed reaction is L-histidyl-[protein] + UTP = N(tele)-(5'-uridylyl)-L-histidyl-[protein] + diphosphate. The enzyme catalyses L-seryl-[protein] + UTP = O-(5'-uridylyl)-L-seryl-[protein] + diphosphate. It catalyses the reaction L-tyrosyl-[protein] + UTP = O-(5'-uridylyl)-L-tyrosyl-[protein] + diphosphate. Nucleotidyltransferase involved in the post-translational modification of proteins. It can catalyze the addition of adenosine monophosphate (AMP) or uridine monophosphate (UMP) to a protein, resulting in modifications known as AMPylation and UMPylation. The chain is Protein nucleotidyltransferase YdiU from Escherichia coli O1:K1 / APEC.